Here is an 87-residue protein sequence, read N- to C-terminus: Small ribosomal subunit protein bS20 (87 aa).

It belongs to the bacterial ribosomal protein bS20 family.

Functionally, binds directly to 16S ribosomal RNA. This chain is Small ribosomal subunit protein bS20, found in Clostridium perfringens (strain ATCC 13124 / DSM 756 / JCM 1290 / NCIMB 6125 / NCTC 8237 / Type A).